Reading from the N-terminus, the 304-residue chain is GTPase Era (304 aa).

Residues 11-179 form the Era-type G domain; that stretch reads YCGFIAIVGR…QKIVRKSLRE (169 aa). The segment at 19–26 is G1; it reads GRPNVGKS. Residue 19-26 participates in GTP binding; the sequence is GRPNVGKS. The interval 45 to 49 is G2; it reads QTTRH. The tract at residues 66–69 is G3; it reads DTPG. GTP contacts are provided by residues 66 to 70 and 128 to 131; these read DTPGL and NKVD. Residues 128–131 are G4; sequence NKVD. Residues 158-160 are G5; sequence ISA. Residues 210–287 form the KH type-2 domain; that stretch reads TGEELPYSVT…HLELWVKVKA (78 aa).

The protein belongs to the TRAFAC class TrmE-Era-EngA-EngB-Septin-like GTPase superfamily. Era GTPase family. Monomer.

Its subcellular location is the cytoplasm. It localises to the cell inner membrane. An essential GTPase that binds both GDP and GTP, with rapid nucleotide exchange. Plays a role in 16S rRNA processing and 30S ribosomal subunit biogenesis and possibly also in cell cycle regulation and energy metabolism. In Actinobacillus pleuropneumoniae serotype 3 (strain JL03), this protein is GTPase Era.